A 211-amino-acid chain; its full sequence is Large ribosomal subunit protein uL4 (211 aa).

The disordered stretch occupies residues 42 to 87 (AHMRQGTASTLTRSEVRGGGRKPYKQKGTGRARQGSVRTPLRPGGG). Residues 60-71 (GGRKPYKQKGTG) show a composition bias toward basic residues.

This sequence belongs to the universal ribosomal protein uL4 family. As to quaternary structure, part of the 50S ribosomal subunit.

Functionally, one of the primary rRNA binding proteins, this protein initially binds near the 5'-end of the 23S rRNA. It is important during the early stages of 50S assembly. It makes multiple contacts with different domains of the 23S rRNA in the assembled 50S subunit and ribosome. In terms of biological role, forms part of the polypeptide exit tunnel. This chain is Large ribosomal subunit protein uL4, found in Synechococcus sp. (strain CC9902).